The sequence spans 94 residues: Aspartyl/glutamyl-tRNA(Asn/Gln) amidotransferase subunit C (94 aa).

It belongs to the GatC family. As to quaternary structure, heterotrimer of A, B and C subunits.

The catalysed reaction is L-glutamyl-tRNA(Gln) + L-glutamine + ATP + H2O = L-glutaminyl-tRNA(Gln) + L-glutamate + ADP + phosphate + H(+). It carries out the reaction L-aspartyl-tRNA(Asn) + L-glutamine + ATP + H2O = L-asparaginyl-tRNA(Asn) + L-glutamate + ADP + phosphate + 2 H(+). Allows the formation of correctly charged Asn-tRNA(Asn) or Gln-tRNA(Gln) through the transamidation of misacylated Asp-tRNA(Asn) or Glu-tRNA(Gln) in organisms which lack either or both of asparaginyl-tRNA or glutaminyl-tRNA synthetases. The reaction takes place in the presence of glutamine and ATP through an activated phospho-Asp-tRNA(Asn) or phospho-Glu-tRNA(Gln). The polypeptide is Aspartyl/glutamyl-tRNA(Asn/Gln) amidotransferase subunit C (Campylobacter jejuni subsp. jejuni serotype O:6 (strain 81116 / NCTC 11828)).